The following is a 256-amino-acid chain: DNA repair protein RecO (256 aa).

It belongs to the RecO family.

Its function is as follows. Involved in DNA repair and RecF pathway recombination. In Clostridium novyi (strain NT), this protein is DNA repair protein RecO.